The chain runs to 547 residues: Glucose-6-phosphate isomerase (547 aa).

The active-site Proton donor is glutamate 351. Residues histidine 382 and lysine 511 contribute to the active site.

It belongs to the GPI family.

It is found in the cytoplasm. The enzyme catalyses alpha-D-glucose 6-phosphate = beta-D-fructose 6-phosphate. It participates in carbohydrate biosynthesis; gluconeogenesis. The protein operates within carbohydrate degradation; glycolysis; D-glyceraldehyde 3-phosphate and glycerone phosphate from D-glucose: step 2/4. Functionally, catalyzes the reversible isomerization of glucose-6-phosphate to fructose-6-phosphate. The sequence is that of Glucose-6-phosphate isomerase from Xanthobacter autotrophicus (strain ATCC BAA-1158 / Py2).